The following is a 506-amino-acid chain: MAWALKLPLADEVIESGLVQDFDASLSGIGQELGAGAYSMSDVLALPIFKQEESSLPSENENKILPFQYVLCTATSPAVKLHEETLTYLNQGQSYEIRMLDNRKIGELPELNGKLVKSIFRVVFHDRRLQYTEHQQLEGWRWNRPGDRILDIDIPMSVGIIDPRANPTQLNTIEFLWDPAKRTSVFIQVHCISTEFTMRKHGGEKGVPFRVQIDTFKENENGEYTEHLHSASSQIKVFKPKGADRKQKTDREKMEKRTPQEKEKYQPSYETTILTECSPWPEITYVSNSPSPGFNSSHNSFPIGEGNGSPNHQPEPPAPIVDVSAGLTPIQNLMPTSTPQEAQQWLHRNRFAAFSRLFTNFSGADLLKLTREDVIQICGPADGIRLFNALKGRIVRPRLTIYVCQESQQLREQQQHKHENGEPGNGAFYVYHAIYLEEMTTIELTEKIAQLFSISPHQINQIYKQGPTGIHVLISDEMIQNFQDESCFILDTMKAETNDSYHIILK.

The 240-residue stretch at 61–300 folds into the Grh/CP2 DB domain; sequence ENKILPFQYV…SPGFNSSHNS (240 aa). The DNA-binding stretch occupies residues 133–395; that stretch reads EHQQLEGWRW…LFNALKGRIV (263 aa). Disordered stretches follow at residues 238–268 and 291–316; these read FKPK…YQPS and SPGF…QPEP. Basic and acidic residues predominate over residues 241-265; sequence KGADRKQKTDREKMEKRTPQEKEKY. The segment covering 291-300 has biased composition (polar residues); sequence SPGFNSSHNS.

The protein belongs to the grh/CP2 family. CP2 subfamily. In terms of assembly, component of the SSP (stage selector protein) complex, which appears to be a heteromer of TFCP2 and 2 copies of NFE4.

Its subcellular location is the nucleus. Functionally, may function as a transcription factor. The protein is Transcription factor CP2 (tfcp2) of Xenopus laevis (African clawed frog).